Reading from the N-terminus, the 413-residue chain is MKWFNTLSHNRWLEQETDRIFDFGKNSVVPTGFGWLGNKGQIKEEMGTHLWITARMLHVYSVAAAMGRPGAYSLVDHGIKAMNGALRDKKYGGWYACVNDEGVVDASKQGYQHFFALLGAASAVTTGHPEARKLLDYTIEIIEKYFWSEEEQMCLESWDEAFSKTEEYRGGNANMHAVEAFLIVYDVTHDKKWLDRAIRVASVIIHDVARNNHYRVNEHFDTQWNPLPDYNKDNPAHRFRAFGGTPGHWIEWGRLMLHIHAALEARCEQPPAWLLEDAKGLFNATVRDAWAPDGADGIVYTVDWEGKPVVRERVRWPIVEAMGTAYALYTVTGDRQYETWYQTWWEYCIKYLMDYENGSWWQELDADNKVTTKVWDGKQDIYHLLHCLVIPRIPLAPGMAPAVAAGLLDINAK.

6-sulfo-beta-D-quinovose-binding residues include Arg55, Tyr111, Asn172, His176, and Arg238. His248 serves as the catalytic Proton donor/acceptor. The 6-sulfo-beta-D-quinovose site is built by Glu251, Gln362, Gln379, and His383. The Proton donor/acceptor role is filled by His383.

Belongs to the N-acylglucosamine 2-epimerase family. Homohexamer.

It catalyses the reaction 6-sulfo-beta-D-quinovose = 6-deoxy-6-sulfo-D-fructose. The catalysed reaction is 6-sulfo-beta-D-quinovose = 6-sulfo-D-rhamnose. Significantly inhibited by Cu(2+), Fe(3+) and Co(2+). Partially inhibited by Mg(2+), Ca(2+) and Mn(2+). Also inhibited by ATP, ADP, dATP, TTP and GTP. Catalyzes the isomerization of sulfoquinovose (SQ) to 6-deoxy-6-sulfo-D-fructose (SF). Can also catalyze the interconversion of SQ and sulforhamnose (SR). Has a clear preference for beta-SQ and little-to-no activity on alpha-SQ. In vitro, can also catalyze the interconversion of mannose, fructose and glucose, or lyxose and xylulose, but has extremely low activity with glucose. The chain is Sulfoquinovose isomerase (yihS) from Escherichia coli (strain K12).